The chain runs to 126 residues: Large ribosomal subunit protein uL14m (126 aa).

Belongs to the universal ribosomal protein uL14 family. In terms of assembly, component of the mitochondrial large ribosomal subunit (mt-LSU). Mature yeast 74S mitochondrial ribosomes consist of a small (37S) and a large (54S) subunit. The 37S small subunit contains a 15S ribosomal RNA (15S mt-rRNA) and at least 32 different proteins. The 54S large subunit contains a 21S rRNA (21S mt-rRNA) and at least 45 different proteins.

It is found in the mitochondrion. Functionally, component of the mitochondrial ribosome (mitoribosome), a dedicated translation machinery responsible for the synthesis of mitochondrial genome-encoded proteins, including at least some of the essential transmembrane subunits of the mitochondrial respiratory chain. The mitoribosomes are attached to the mitochondrial inner membrane and translation products are cotranslationally integrated into the membrane. The protein is Large ribosomal subunit protein uL14m (mrpl38) of Schizosaccharomyces pombe (strain 972 / ATCC 24843) (Fission yeast).